Here is a 398-residue protein sequence, read N- to C-terminus: Acetate kinase (398 aa).

Position 7 (N7) interacts with Mg(2+). K14 is a binding site for ATP. Residue R91 coordinates substrate. D148 functions as the Proton donor/acceptor in the catalytic mechanism. ATP is bound by residues 208 to 212 (HLGNG), 283 to 285 (DFR), and 331 to 335 (GIGEH). E386 contacts Mg(2+).

This sequence belongs to the acetokinase family. As to quaternary structure, homodimer. Mg(2+) is required as a cofactor. Requires Mn(2+) as cofactor.

The protein localises to the cytoplasm. The catalysed reaction is acetate + ATP = acetyl phosphate + ADP. It participates in metabolic intermediate biosynthesis; acetyl-CoA biosynthesis; acetyl-CoA from acetate: step 1/2. Functionally, catalyzes the formation of acetyl phosphate from acetate and ATP. Can also catalyze the reverse reaction. This Clostridium botulinum (strain Eklund 17B / Type B) protein is Acetate kinase.